The chain runs to 408 residues: MRTSPRMKWFVLLFTFVFAIGMNSFRNSFQFFMLPMADAFHADRSLISVSVSIFMITTGIVQFFVGFFIDRFSVRKIMALGAVCISASFLVLPYSPNVHVFSAIYGVLGGIGYSCAVGVTTQYFISCWFDTHKGLALAILTNANSAGLLLLSPIWAAAPYHAGWQSTYTILGIVMAAVLLPLLVFGMKHPPHAQAETVKKSYDWRGFWNVMKQSRLIHILYFGVFTCGFTMGIIDAHLVPILKDAHVSHVNGMMAAFGAFIIIGGLLAGWLSDLLGSRSVMLSILFFIRLLSLICLLIPILGIHHSDLWYFGFILLFGLSYTGVIPLTAASISESYQTGLIGSLLGINFFIHQVAGALSVYAGGLFFDMTHGYLLIVAVCIVFVGLSAVIELVPFLDKQKAKETHHSI.

12 consecutive transmembrane segments (helical) span residues W9–F29, V49–I69, I77–N97, V100–T120, L135–W155, T167–M187, L216–A236, G252–S272, S283–I303, L308–T328, L340–V360, and Y373–V393.

Belongs to the major facilitator superfamily.

The protein localises to the cell membrane. This is an uncharacterized protein from Bacillus subtilis (strain 168).